Consider the following 151-residue polypeptide: Large ribosomal subunit protein uL15 (151 aa).

The segment at 1 to 62 is disordered; sequence MVKLNELFPK…GGQMPLYRRV (62 aa). The segment covering 11–20 has biased composition (basic residues); the sequence is HGSRKAKRRI.

Belongs to the universal ribosomal protein uL15 family. Part of the 50S ribosomal subunit.

Binds to the 23S rRNA. The sequence is that of Large ribosomal subunit protein uL15 from Elusimicrobium minutum (strain Pei191).